A 149-amino-acid polypeptide reads, in one-letter code: Nascent polypeptide-associated complex subunit beta-2 (149 aa).

The NAC-A/B domain maps to 38–103 (DKDNTKLQAE…PKENTLNGLY (66 aa)).

It belongs to the NAC-beta family. In terms of assembly, part of the nascent polypeptide-associated complex (NAC), consisting of EGD2 and either EGD1 or BTT1. NAC associates with ribosomes via EGD1 or BTT1.

It localises to the cytoplasm. It is found in the nucleus. Its function is as follows. Acts as a component of the nascent polypeptide-associated complex (NAC), which promotes mitochondrial protein import by enhancing productive ribosome interactions with the outer mitochondrial membrane. Also blocks the inappropriate interaction of ribosomes translating non-secretory nascent polypeptides with translocation sites in the membrane of the endoplasmic reticulum. BTT1 may act as a transcription factor that exert a negative effect on the expression of several genes that are transcribed by RNA polymerase II. This is Nascent polypeptide-associated complex subunit beta-2 (BTT1) from Saccharomyces cerevisiae (strain YJM789) (Baker's yeast).